Consider the following 35-residue polypeptide: Putative gene 58 protein (35 aa).

This is Putative gene 58 protein (58) from Bacillus phage SP01 (Bacteriophage SP01).